The following is a 64-amino-acid chain: DNA gyrase inhibitor YacG (64 aa).

Zn(2+)-binding residues include Cys-9, Cys-12, Cys-28, and Cys-32. Positions 45–64 (KRIPSSGDLSESDDWSEEQK) are disordered. The span at 54-64 (SESDDWSEEQK) shows a compositional bias: acidic residues.

Belongs to the DNA gyrase inhibitor YacG family. In terms of assembly, interacts with GyrB. Zn(2+) serves as cofactor.

Inhibits all the catalytic activities of DNA gyrase by preventing its interaction with DNA. Acts by binding directly to the C-terminal domain of GyrB, which probably disrupts DNA binding by the gyrase. This chain is DNA gyrase inhibitor YacG, found in Citrobacter koseri (strain ATCC BAA-895 / CDC 4225-83 / SGSC4696).